A 292-amino-acid chain; its full sequence is Calcium-binding protein CBP (292 aa).

The tract at residues 1 to 80 (MAGYPPNPGS…YGSGGGYGAP (80 aa)) is disordered. Positions 12–21 (YPYGGAGGYG) are enriched in gly residues. Residues 22–40 (APPPPYGSSPAPSAPPYGA) show a composition bias toward pro residues. 2 EF-hand domains span residues 121-156 (GTDP…YSQS) and 187-222 (YSLQ…LGYS). D134, D136, S138, M140, E145, D200, D202, S204, K206, and E211 together coordinate Ca(2+).

Potential calcium sensor. This chain is Calcium-binding protein CBP, found in Oryza sativa subsp. japonica (Rice).